Consider the following 344-residue polypeptide: Holliday junction branch migration complex subunit RuvB (344 aa).

A large ATPase domain (RuvB-L) region spans residues 4 to 184 (QDRIIDANAK…FGIVQRLEFY (181 aa)). ATP contacts are provided by residues R24, G65, K68, T69, T70, 131–133 (EDF), R174, Y184, and R221. Residue T69 coordinates Mg(2+). The small ATPAse domain (RuvB-S) stretch occupies residues 185-255 (NIEDLTHIVE…IADLALNMLN (71 aa)). The head domain (RuvB-H) stretch occupies residues 258–344 (EHGFDHMDRR…ALKQDSLPGI (87 aa)). R294, R313, and R318 together coordinate DNA.

It belongs to the RuvB family. In terms of assembly, homohexamer. Forms an RuvA(8)-RuvB(12)-Holliday junction (HJ) complex. HJ DNA is sandwiched between 2 RuvA tetramers; dsDNA enters through RuvA and exits via RuvB. An RuvB hexamer assembles on each DNA strand where it exits the tetramer. Each RuvB hexamer is contacted by two RuvA subunits (via domain III) on 2 adjacent RuvB subunits; this complex drives branch migration. In the full resolvosome a probable DNA-RuvA(4)-RuvB(12)-RuvC(2) complex forms which resolves the HJ.

Its subcellular location is the cytoplasm. The catalysed reaction is ATP + H2O = ADP + phosphate + H(+). The RuvA-RuvB-RuvC complex processes Holliday junction (HJ) DNA during genetic recombination and DNA repair, while the RuvA-RuvB complex plays an important role in the rescue of blocked DNA replication forks via replication fork reversal (RFR). RuvA specifically binds to HJ cruciform DNA, conferring on it an open structure. The RuvB hexamer acts as an ATP-dependent pump, pulling dsDNA into and through the RuvAB complex. RuvB forms 2 homohexamers on either side of HJ DNA bound by 1 or 2 RuvA tetramers; 4 subunits per hexamer contact DNA at a time. Coordinated motions by a converter formed by DNA-disengaged RuvB subunits stimulates ATP hydrolysis and nucleotide exchange. Immobilization of the converter enables RuvB to convert the ATP-contained energy into a lever motion, pulling 2 nucleotides of DNA out of the RuvA tetramer per ATP hydrolyzed, thus driving DNA branch migration. The RuvB motors rotate together with the DNA substrate, which together with the progressing nucleotide cycle form the mechanistic basis for DNA recombination by continuous HJ branch migration. Branch migration allows RuvC to scan DNA until it finds its consensus sequence, where it cleaves and resolves cruciform DNA. This chain is Holliday junction branch migration complex subunit RuvB, found in Saccharophagus degradans (strain 2-40 / ATCC 43961 / DSM 17024).